We begin with the raw amino-acid sequence, 1199 residues long: AP-3 complex subunit delta-1 (1199 aa).

Alanine 2 is subject to N-acetylalanine. HEAT repeat units follow at residues 34 to 71 (KYIS…LGYD), 142 to 179 (DLAR…KYPE), 180 to 216 (SLRP…RNPK), 218 to 254 (YLSL…LEPR), 257 to 296 (KKLI…GMPN), 298 to 336 (SASI…THPK), 337 to 373 (SVQS…KKNL), 375 to 409 (EIVK…QSNY), and 521 to 558 (VYVQ…ERLP). 2 disordered regions span residues 623–695 (LDAW…RYQD) and 724–963 (YVKL…EPIP). Serine 632, serine 634, and serine 636 each carry phosphoserine. 2 stretches are compositionally biased toward basic and acidic residues: residues 639-651 (EKPK…EEPR) and 665-675 (LARRREARKQE). Positions 659-679 (EEDEEELARRREARKQEQANN) form a coiled coil. Position 688 is a phosphoserine (serine 688). Positions 722 to 750 (DQYVKLEEQRRHRQRLEKDKKRKKKEKGK) form a coiled coil. Residues 732 to 754 (RHRQRLEKDKKRKKKEKGKRRHS) show a composition bias toward basic residues. Residues serine 754 and serine 755 each carry the phosphoserine modification. Residue threonine 758 is modified to Phosphothreonine. Phosphoserine is present on residues serine 760, serine 784, and serine 825. Acidic residues predominate over residues 773–790 (ITEEMPENALPSDEDDKD). The span at 791-836 (PNDPYRALDIDLDKPLADSEKLPVQKHRNAEAVKSPEKEGVLGVEK) shows a compositional bias: basic and acidic residues. A compositionally biased stretch (basic residues) spans 837–846 (KSKKPKKKEK). The stretch at 843–863 (KKEKKTKEREREKKDKKGEDL) forms a coiled coil. Basic and acidic residues predominate over residues 847–862 (KTKEREREKKDKKGED). Pro residues predominate over residues 870–880 (TPPPAAAPIPA). Basic and acidic residues predominate over residues 894-916 (PKDECEVLKGEEEDHVDHDQERK). The stretch at 911-934 (HDQERKSSRHKKKKHRKEKEKEER) forms a coiled coil. Residues 917-928 (SSRHKKKKHRKE) show a composition bias toward basic residues.

The protein belongs to the adaptor complexes large subunit family. In terms of assembly, adaptor protein complex 3 (AP-3) is a heterotetramer composed of two large adaptins (delta-type subunit AP3D1 and beta-type subunit AP3B1 or AP3B2), a medium adaptin (mu-type subunit AP3M1 or AP3M2) and a small adaptin (sigma-type subunit APS1 or AP3S2). AP-3 associates with the BLOC-1 complex. Interacts with SLC30A2. Interacts with CLN3 (via dileucine motif); this interaction facilitates lysosomal targeting.

The protein localises to the cytoplasm. The protein resides in the golgi apparatus membrane. Functionally, part of the AP-3 complex, an adaptor-related complex which is not clathrin-associated. The complex is associated with the Golgi region as well as more peripheral structures. It facilitates the budding of vesicles from the Golgi membrane and may be directly involved in trafficking to lysosomes. Involved in process of CD8+ T-cell and NK cell degranulation. In concert with the BLOC-1 complex, AP-3 is required to target cargos into vesicles assembled at cell bodies for delivery into neurites and nerve terminals. This Mus musculus (Mouse) protein is AP-3 complex subunit delta-1 (Ap3d1).